The chain runs to 209 residues: ADP-ribose pyrophosphatase (209 aa).

Residues 28–29 (FF), 51–52 (RE), R56, and R79 contribute to the substrate site. The Nudix hydrolase domain maps to 55-193 (ERGHAAVLLP…KIDNAASVIA (139 aa)). A96 provides a ligand contact to Mg(2+). The Nudix box motif lies at 97 to 118 (GMIEEGESVEDVARREAIEEAG). M98 contributes to the substrate binding site. Positions 112 and 116 each coordinate Mg(2+). Substrate-binding positions include 133 to 135 (SPG) and E139. E162 serves as the catalytic Proton acceptor. E164 lines the Mg(2+) pocket.

Belongs to the Nudix hydrolase family. NudF subfamily. As to quaternary structure, homodimer. The cofactor is Mg(2+).

The enzyme catalyses ADP-D-ribose + H2O = D-ribose 5-phosphate + AMP + 2 H(+). With respect to regulation, inhibited by phosphorylated compounds such as AMP, ADP, ATP, 3-phosphoglyceric acid and PPi. Not inhibited by orthophosphate. Activity is high in cells grown in low glucose concentrations and decreases dramatically as glucose concentration increases. Acts on ADP-mannose and ADP-glucose as well as ADP-ribose. Prevents glycogen biosynthesis. The reaction catalyzed by this enzyme is a limiting step of the gluconeogenic process. The chain is ADP-ribose pyrophosphatase (nudF) from Escherichia coli O157:H7.